Consider the following 618-residue polypeptide: MERYRIRRERKEILKNEIEKQRDLIQKEDFRLMSNENNEHNDEHDNRLIELNKQLNILKLELEELRLQGDRFYVLNGDDTILMDIDETSKITFYLCRHFTDLTKIPIEESNESRILIVNELETVSDPSIEPIFEFQKVISSKSIHQLFSVKTNFDNNNNNNNNSNNNNNGNKPSLFERVKQNTWSLGISPLRRTTSDPTIFGERFSPPKSISNFIERFKDNKEKDKEKDNSSLSITIQNNNTATTTTTTTTTTTTTTTTTTTTTTTTTTPTSSTTVNTNINQEKLRKYSTTPSINQINNQQNIENNNNNNNNNQEIGGKILLTWSNKETSMYILKTQEESLELLELLGSHIDRSKKVTAKQSQTIKILFQKKSTIYESTNPDHEEYLKHLWSLLYPEQEFQKKSPLWKKFGFQSDDPTRDFRGMGIMGLLNLIHLVQHHNDWVQEILAQDRDYPFAVAGINISNLIFEVFQISEDSLQQPWYSSFWSSSYMAMLCSMSRHNDHAFEELYFLIFNLLDHLWIQMNATYMMFPLVIKKLKSQLNEISNFNPNSFDEVRARFDLIQRLNIIDNPIDQQQQQLQQQQQSLPLPSSPRSFLNNYQQTTTSSTSISPSKNTQNN.

Residues 1 to 72 (MERYRIRRER…EELRLQGDRF (72 aa)) adopt a coiled-coil conformation. 2 disordered regions span residues 153–175 (NFDN…KPSL) and 245–276 (TTTT…STTV). 2 stretches are compositionally biased toward low complexity: residues 156 to 171 (NNNN…NNGN) and 245 to 275 (TTTT…SSTT). In terms of domain architecture, ELMO spans 382–545 (DHEEYLKHLW…KLKSQLNEIS (164 aa)). 2 stretches are compositionally biased toward low complexity: residues 574-592 (QQQQ…PSSP) and 602-618 (TTTS…TQNN). The segment at 574 to 618 (QQQQQLQQQQQSLPLPSSPRSFLNNYQQTTTSSTSISPSKNTQNN) is disordered.

This is ELMO domain-containing protein C (elmoC) from Dictyostelium discoideum (Social amoeba).